A 275-amino-acid polypeptide reads, in one-letter code: 4-diphosphocytidyl-2-C-methyl-D-erythritol kinase (275 aa).

Residue lysine 15 is part of the active site. Position 97 to 107 (97 to 107 (PMGSGLGGGSS)) interacts with ATP. The active site involves aspartate 137.

It belongs to the GHMP kinase family. IspE subfamily.

The catalysed reaction is 4-CDP-2-C-methyl-D-erythritol + ATP = 4-CDP-2-C-methyl-D-erythritol 2-phosphate + ADP + H(+). It functions in the pathway isoprenoid biosynthesis; isopentenyl diphosphate biosynthesis via DXP pathway; isopentenyl diphosphate from 1-deoxy-D-xylulose 5-phosphate: step 3/6. Its function is as follows. Catalyzes the phosphorylation of the position 2 hydroxy group of 4-diphosphocytidyl-2C-methyl-D-erythritol. The chain is 4-diphosphocytidyl-2-C-methyl-D-erythritol kinase from Pseudothermotoga lettingae (strain ATCC BAA-301 / DSM 14385 / NBRC 107922 / TMO) (Thermotoga lettingae).